A 246-amino-acid chain; its full sequence is Transmembrane protein 41 homolog (246 aa).

6 consecutive transmembrane segments (helical) span residues 12-32 (WLVLLIFATFAVSIFAVYSNF), 68-88 (SVVLCGVIVVYVFLQSFAIPG), 101-123 (PFYVAIVLVCSCSATGAAICYTI), 159-179 (IFLRVTPIVPNWLINIASPVL), 182-202 (PLAPFFWGTFLGVAPPSFLYI), and 219-239 (SWSSIVLLTGSAILSLAPILL).

Belongs to the TMEM41 family.

The protein resides in the membrane. This is Transmembrane protein 41 homolog (tag-175) from Caenorhabditis elegans.